The sequence spans 830 residues: MTSALRVLVCGDHPNLILYTSRFQHAKNIEFYLVNNSKNANYEVSSLFYGTERFQIQNHFQSLLDLVDLNNENGGLVFDLIIMSASSLQEIPQVLRDIKPMMNKTTKILFESSGFIYLEPFIKASVDLSLSNIFSIFTDYDIRRLDNGSYKQFTTANAKSFSVSIGQTTSVHENSYSSDIIPILNTFQKLFQKLFPRDVVTLYDHSPSAFLAKEWELALPQICFDPLLIILEEKNPSTLDDHVLAKPLISGLLGESLLIIKKMGIAMNNPNFQNEQTILKHWKNKCEDLPDGPALLYNFIHKASSLNIDLLLLQPILLADDFGVKTPYLECLFTMMTQYQLLNKGDSEWFIRKDENTALTRVDDLQNSIALKDGKIMQLQNSESTLKNEIKELQSQVLSLKQEVSSSKANNGQELEILKKKVQMGDNSLFDRPNSNTNGISPSDNIVDVDLNYERSDQGNNSSGNDSRRQSFFNSTSDTTLSRDETSLKERELEVRMKELELQERELELQRKALQQQQQYQQRPPKQVYSGPSGTPTSGNNNNKSYNPNRKSSYSQPQHVAMMTSRGLHGPSAASSSPVISANNFVDPVSSGTPYSSNSSRFSQQIPSQQYMHTVKPTSRKNRSSVMPNIGYVPGLTNNEYGRKFNGNGMNGTQSRLNSLSNQSTFRSQQGPPITQQKSFQNNGGSMRTNRIPSANYNISNQQSGFVNSISSPNLSNLENRNTVQNSRNADSAPCVNQLNSDSPPQLQSLSQNGTSKVPQINITQPSPIQTNFATSDNPAAVIKLGTPSEDTVSAAATANNISTMGDESRKEDVKEKKKKKFSFFGKRKK.

Residues 379 to 400 (LQNSESTLKNEIKELQSQVLSL) adopt a coiled-coil conformation. Disordered regions lie at residues 426-488 (DNSL…ETSL), 513-558 (ALQQ…SQPQ), 648-699 (NGMN…NYNI), and 727-757 (SRNA…GTSK). A compositionally biased stretch (polar residues) spans 433-444 (PNSNTNGISPSD). Residues 481–514 (LSRDETSLKERELEVRMKELELQERELELQRKAL) are a coiled coil. Low complexity-rich tracts occupy residues 513 to 527 (ALQQ…PPKQ) and 538 to 555 (SGNN…SSYS). Positions 651–699 (NGTQSRLNSLSNQSTFRSQQGPPITQQKSFQNNGGSMRTNRIPSANYNI) are enriched in polar residues. Phosphoserine is present on residues Ser-659 and Ser-732. Residues 738–753 (QLNSDSPPQLQSLSQN) are compositionally biased toward low complexity. Position 767 is a phosphoserine (Ser-767). The span at 796–806 (AATANNISTMG) shows a compositional bias: polar residues. Residues 796–830 (AATANNISTMGDESRKEDVKEKKKKKFSFFGKRKK) form a disordered region. The segment covering 807 to 816 (DESRKEDVKE) has biased composition (basic and acidic residues). The segment covering 817 to 830 (KKKKKFSFFGKRKK) has biased composition (basic residues).

This sequence belongs to the PAM1/SVL3 family.

In terms of biological role, not known. It is a suppressor of protein phosphatase 2A depletion. This is Protein PAM1 (PAM1) from Saccharomyces cerevisiae (strain ATCC 204508 / S288c) (Baker's yeast).